The primary structure comprises 305 residues: Acetylglutamate kinase (305 aa).

Residues 75 to 76 (GG), arginine 97, and asparagine 202 contribute to the substrate site.

The protein belongs to the acetylglutamate kinase family. ArgB subfamily.

It localises to the cytoplasm. It carries out the reaction N-acetyl-L-glutamate + ATP = N-acetyl-L-glutamyl 5-phosphate + ADP. It participates in amino-acid biosynthesis; L-arginine biosynthesis; N(2)-acetyl-L-ornithine from L-glutamate: step 2/4. Its function is as follows. Catalyzes the ATP-dependent phosphorylation of N-acetyl-L-glutamate. The chain is Acetylglutamate kinase from Rhodospirillum centenum (strain ATCC 51521 / SW).